The sequence spans 570 residues: Multidrug and toxin extrusion protein 1 (570 aa).

M1 is subject to N-acetylmethionine. The Cytoplasmic portion of the chain corresponds to M1–A37. A helical membrane pass occupies residues L38–I58. Over S59–D72 the chain is Extracellular. The helical transmembrane segment at A73–S93 threads the bilayer. Residues S94–A120 are Cytoplasmic-facing. Residues L121–L141 traverse the membrane as a helical segment. The Extracellular segment spans residues L142–R152. The chain crosses the membrane as a helical span at residues L153–L173. Residues Q174–K176 are Cytoplasmic-facing. Residues Y177–V197 traverse the membrane as a helical segment. Residues N198–S216 are Extracellular-facing. A helical transmembrane segment spans residues A217–G237. The Cytoplasmic portion of the chain corresponds to K238–E251. The chain crosses the membrane as a helical span at residues C252–M272. The Extracellular segment spans residues E273–Q295. Residues S296–A316 form a helical membrane-spanning segment. Residues S317–S336 lie on the Cytoplasmic side of the membrane. A helical transmembrane segment spans residues T337 to C357. The Extracellular segment spans residues K358–D370. A helical transmembrane segment spans residues I371–L391. At A392–G408 the chain is on the cytoplasmic side. The helical transmembrane segment at A409 to F429 threads the bilayer. At A430 to G437 the chain is on the extracellular side. A helical transmembrane segment spans residues L438 to I458. The Cytoplasmic segment spans residues Q459–R546. Residues D508 to S534 form a disordered region. A compositionally biased stretch (basic and acidic residues) spans M521–D533. The helical transmembrane segment at G547–V567 threads the bilayer. Over R568–Q570 the chain is Extracellular.

Belongs to the multi antimicrobial extrusion (MATE) (TC 2.A.66.1) family.

Its subcellular location is the cell membrane. The protein localises to the apical cell membrane. The enzyme catalyses thiamine(out) + H(+)(in) = thiamine(in) + H(+)(out). It carries out the reaction estrone 3-sulfate(in) + H(+)(out) = estrone 3-sulfate(out) + H(+)(in). It catalyses the reaction creatinine(in) + H(+)(out) = creatinine(out) + H(+)(in). The catalysed reaction is agmatine(in) + H(+)(out) = agmatine(out) + H(+)(in). Its function is as follows. Multidrug efflux pump that functions as a H(+)/organic cation antiporter. Plays a physiological role in the excretion of cationic compounds including endogenous metabolites, drugs, toxins through the kidney and liver, into urine and bile respectively. Mediates the efflux of endogenous compounds such as creatinine, vitamin B1/thiamine, agmatine and estrone-3-sulfate. May also contribute to regulate the transport of cationic compounds in testis across the blood-testis-barrier. The protein is Multidrug and toxin extrusion protein 1 (SLC47A1) of Pongo abelii (Sumatran orangutan).